A 251-amino-acid polypeptide reads, in one-letter code: Insertion sequence IS5376 putative ATP-binding protein (251 aa).

105 to 112 (GPPGIGKT) contributes to the ATP binding site.

It belongs to the IS21/IS1162 putative ATP-binding protein family.

The chain is Insertion sequence IS5376 putative ATP-binding protein from Geobacillus stearothermophilus (Bacillus stearothermophilus).